Consider the following 642-residue polypeptide: Chaperone protein DnaK (642 aa).

Thr-198 is modified (phosphothreonine; by autocatalysis). The interval 602-642 (EAAGGAEAEAAAGGHGGASGSHDDKVVDADFEEVDGDKKGK) is disordered. The span at 603–613 (AAGGAEAEAAA) shows a compositional bias: low complexity.

Belongs to the heat shock protein 70 family.

Acts as a chaperone. This is Chaperone protein DnaK from Paramagnetospirillum magneticum (strain ATCC 700264 / AMB-1) (Magnetospirillum magneticum).